The sequence spans 356 residues: Hyaluronan and proteoglycan link protein 1 (356 aa).

Positions 1–9 (MRSLLLLVL) are excised as a propeptide. The Ig-like V-type domain occupies 40 to 154 (PRLLVEAEQA…EGLEDDTAVV (115 aa)). The N-linked (GlcNAc...) asparagine glycan is linked to N58. 5 disulfide bridges follow: C63–C141, C183–C254, C207–C228, C281–C351, and C306–C327. Link domains are found at residues 161 to 256 (VVFP…FCFT) and 261 to 353 (GRFY…YCFR).

Belongs to the HAPLN family. As to expression, ubiquitously expressed.

The protein localises to the secreted. The protein resides in the extracellular space. It is found in the extracellular matrix. Stabilizes the aggregates of proteoglycan monomers with hyaluronic acid in the extracellular cartilage matrix. This is Hyaluronan and proteoglycan link protein 1 (Hapln1) from Mus musculus (Mouse).